A 172-amino-acid polypeptide reads, in one-letter code: Small t antigen (172 aa).

N-acetylmethionine; by host is present on Met-1. The 64-residue stretch at 12–75 (ELMDLLGLER…VKVAHQPDFG (64 aa)) folds into the J domain. The C4-type; atypical zinc finger occupies 101–114 (CATKPSAHCPCMLC). Residues 120–141 (HVYRKFLRRDPLVWIDCYCFDC) form an H1C3-type; atypical zinc finger.

Interacts with host PPP2R1A; the interaction inhibits PP2A activity.

The protein resides in the host cytoplasm. Its subcellular location is the host nucleus. In terms of biological role, promotes efficient viral genome replication by accelerating both G1 and S phase progression of the cell cycle. Inhibits host PP2A by binding to the A subunit, thereby displacing lower affinity regulatory B subunit. Inactivation of PP2A in turn results in the transactivation of cyclin A and cyclin D1 promoters. Late during the infection cycle, ST may induce dephosphorylation of host MTOR, leading to the inhibition of cap-dependent translation. May establish and maintain high levels of viral genomes during persistent infection in cell culture. The polypeptide is Small t antigen (Simian virus 12 (strain wt100) (SV-12)).